Reading from the N-terminus, the 555-residue chain is Inorganic phosphate transporter 1-11 (555 aa).

Residues 1 to 28 are Cytoplasmic-facing; sequence MADADGGSNLAVLDALDSARTQMYHMKA. The helical transmembrane segment at 29–49 threads the bilayer; that stretch reads IVIAGMGFFTDAYDLFCISTV. Residues 50–77 lie on the Extracellular side of the membrane; sequence SKLLGRLYYQPDGSTDSKPGALSKTANN. A helical transmembrane segment spans residues 78–98; it reads MVIGVALVGTLMGQLVFGYFG. Topologically, residues 99 to 105 are cytoplasmic; sequence DKLGRKR. A helical transmembrane segment spans residues 106-126; it reads VYGVTLILMAACAIGSGLSFG. The Extracellular segment spans residues 127 to 130; the sequence is SSRK. The helical transmembrane segment at 131–151 threads the bilayer; sequence AVIGTLCFFRFWLGFGIGGDY. The Cytoplasmic portion of the chain corresponds to 152–167; it reads PLSATIMSEYSNKKTR. A helical transmembrane segment spans residues 168–188; sequence GAFIAAVFAMQGVGIIFAGLV. The Extracellular segment spans residues 189 to 216; that stretch reads SMIVSSIFLTYNKAPSYKGNHDLSRQMP. A helical membrane pass occupies residues 217-237; sequence AADYVWRIVLMIGAFPALATF. Residues 238–298 lie on the Cytoplasmic side of the membrane; it reads YWRMKMPETA…PLLSMEFARR (61 aa). Residues 299–319 form a helical membrane-spanning segment; it reads HGLHLIGTTTTWFLLDIAFYS. The Extracellular portion of the chain corresponds to 320 to 351; the sequence is QNLTQKDIFPAMGLISGAAEVNALTEMFQISK. A helical transmembrane segment spans residues 352–372; sequence ASFLVALLGTFPGYWVTVALI. The Cytoplasmic portion of the chain corresponds to 373–377; the sequence is DKMGR. The chain crosses the membrane as a helical span at residues 378–398; sequence YMIQLIGFFMMSMFMLAMGIL. The Extracellular portion of the chain corresponds to 399-408; it reads YDYLKTHHFL. The chain crosses the membrane as a helical span at residues 409-436; that stretch reads FGLLYALTFFFANFGPNSTTFVLPAELF. The Cytoplasmic segment spans residues 437-442; the sequence is PTRVRS. The chain crosses the membrane as a helical span at residues 443 to 463; it reads TCHAISAAAGKAGAIVAAFGI. Over 464 to 477 the chain is Extracellular; sequence QKLTYNSQVKSIKK. A helical transmembrane segment spans residues 478 to 498; it reads ALIILSITNMLGFFFTFLVPE. Topologically, residues 499–555 are cytoplasmic; sequence TMGRSLEEISGEDGNTGAGGGGAPAAANAGVGVSASDVSRDEKFPASSTEWQTSMHA. Positions 506-555 are disordered; that stretch reads EISGEDGNTGAGGGGAPAAANAGVGVSASDVSRDEKFPASSTEWQTSMHA. Residues 512–521 are compositionally biased toward gly residues; it reads GNTGAGGGGA. Low complexity predominate over residues 522–535; that stretch reads PAAANAGVGVSASD. The segment covering 544-555 has biased composition (polar residues); that stretch reads ASSTEWQTSMHA.

It belongs to the major facilitator superfamily. Phosphate:H(+) symporter (TC 2.A.1.9) family.

The protein localises to the membrane. In terms of biological role, symbiosis-specific regulated inorganic phosphate (Pi) transporter. Probably involved in symbiosis-mediated Pi uptake in roots colonized by myccorhizal fungi. The protein is Inorganic phosphate transporter 1-11 (PHT1-11) of Oryza sativa subsp. japonica (Rice).